The chain runs to 169 residues: Inorganic pyrophosphatase (169 aa).

Met-1 carries the post-translational modification N-formylmethionine. Residues Lys-28, Arg-42, and Tyr-54 each coordinate substrate. Mg(2+) contacts are provided by Asp-64, Asp-69, and Asp-101. Tyr-138 contacts substrate.

Belongs to the PPase family. As to quaternary structure, homohexamer. It depends on Mg(2+) as a cofactor.

The protein localises to the cytoplasm. The enzyme catalyses diphosphate + H2O = 2 phosphate + H(+). Its function is as follows. Catalyzes the hydrolysis of inorganic pyrophosphate (PPi) forming two phosphate ions. This Nostoc sp. (strain PCC 7120 / SAG 25.82 / UTEX 2576) protein is Inorganic pyrophosphatase.